The following is a 170-amino-acid chain: Keratin-associated protein 9-2 (170 aa).

A run of 17 repeats spans residues 8–12, 13–17, 18–22, 37–41, 42–46, 51–55, 61–65, 66–70, 75–79, 80–84, 85–89, 90–94, 95–99, 140–144, 145–149, 150–154, and 164–168. A 17 X 5 AA repeats of C-C-[RQVSGE]-[SPTQ]-[TASP] region spans residues 8-168; that stretch reads CCQPTCCRTT…TCVSSCCQPS (161 aa).

This sequence belongs to the KRTAP type 9 family. In terms of assembly, interacts with hair keratins.

Its function is as follows. In the hair cortex, hair keratin intermediate filaments are embedded in an interfilamentous matrix, consisting of hair keratin-associated proteins (KRTAP), which are essential for the formation of a rigid and resistant hair shaft through their extensive disulfide bond cross-linking with abundant cysteine residues of hair keratins. The matrix proteins include the high-sulfur and high-glycine-tyrosine keratins. The polypeptide is Keratin-associated protein 9-2 (KRTAP9-2) (Pan troglodytes (Chimpanzee)).